The chain runs to 109 residues: Fluoride-specific ion channel FluC 1 (109 aa).

3 helical membrane-spanning segments follow: residues F21–I41, I52–Y72, and L83–Q103.

The protein belongs to the fluoride channel Fluc/FEX (TC 1.A.43) family.

It is found in the cell inner membrane. The enzyme catalyses fluoride(in) = fluoride(out). In terms of biological role, fluoride-specific ion channel. Important for reducing fluoride concentration in the cell, thus reducing its toxicity. The protein is Fluoride-specific ion channel FluC 1 of Prochlorococcus marinus subsp. pastoris (strain CCMP1986 / NIES-2087 / MED4).